A 288-amino-acid polypeptide reads, in one-letter code: MKKIAIFAKVHDPRALAVAEELIEWLAARGVTAHVEEHLSKRLRRTTLAESSESTEIAADADLVVVLGGDGTLIAAARLVGERDIPILAVNLGSLGFLTEITLDELYPSVERCLAGDFEVTERMMLMASVERSGEVVELHRVLNDVVINKGALARIIDMETSVNCRYLTTFKADGLIVSTPTGSTGYSLSANGPILHPELECISITPICPHTLTNRPVVVAADSHIAIKLNYAPDESVFLTLDGQVGMKLLSGDVVQITKAAHVTRLIRSRSKDYFEVLRTKLKWGER.

D70 (proton acceptor) is an active-site residue. NAD(+) contacts are provided by residues 70–71, 144–145, R155, K172, D174, 185–190, and Q245; these read DG, ND, and TGYSLS.

Belongs to the NAD kinase family. A divalent metal cation serves as cofactor.

The protein resides in the cytoplasm. It catalyses the reaction NAD(+) + ATP = ADP + NADP(+) + H(+). Its function is as follows. Involved in the regulation of the intracellular balance of NAD and NADP, and is a key enzyme in the biosynthesis of NADP. Catalyzes specifically the phosphorylation on 2'-hydroxyl of the adenosine moiety of NAD to yield NADP. The sequence is that of NAD kinase from Geobacter sp. (strain M21).